The primary structure comprises 484 residues: Glutathione reductase (484 aa).

FAD contacts are provided by S32 and G33. Residue S32 participates in glutathione binding. R39 contacts glutathione. FAD-binding residues include E52, T59, C60, and K68. A disulfide bond links C60 and C65. A glutathione-binding site is contributed by Y122. A138 is a binding site for FAD. Residues A204, I207, E210, R227, and R233 each contribute to the NADP(+) site. T242 lines the glutathione pocket. Residue G293 coordinates NADP(+). D333 lines the FAD pocket. E339 contributes to the NADP(+) binding site. FAD is bound at residue T341. R349 contacts glutathione. V374 is a binding site for NADP(+). A glutathione-binding site is contributed by K426. FAD is bound at residue H473. The Proton acceptor role is filled by H473.

The protein belongs to the class-I pyridine nucleotide-disulfide oxidoreductase family. As to quaternary structure, homodimer. The cofactor is FAD.

It is found in the cytoplasm. Its subcellular location is the mitochondrion. The enzyme catalyses 2 glutathione + NADP(+) = glutathione disulfide + NADPH + H(+). Catalyzes the reduction of glutathione disulfide (GSSG) to reduced glutathione (GSH). Constitutes the major mechanism to maintain a high GSH:GSSG ratio in the cytosol. In Kluyveromyces lactis (strain ATCC 8585 / CBS 2359 / DSM 70799 / NBRC 1267 / NRRL Y-1140 / WM37) (Yeast), this protein is Glutathione reductase (GLR1).